Here is a 214-residue protein sequence, read N- to C-terminus: LOB domain-containing protein 7 (214 aa).

The LOB domain occupies threonine 12–isoleucine 113.

It belongs to the LOB domain-containing protein family.

The polypeptide is LOB domain-containing protein 7 (LBD7) (Arabidopsis thaliana (Mouse-ear cress)).